Consider the following 296-residue polypeptide: Transcription factor bHLH99 (296 aa).

Residues 99–150 (NQRMNHIAVERNRRKQMNHFLSILKSMMPLSYSQPNDQASIIEGTISYLKKL) form the bHLH domain.

In terms of assembly, homodimer. As to expression, expressed constitutively in roots, stems, and flowers.

The protein resides in the nucleus. The chain is Transcription factor bHLH99 (BHLH99) from Arabidopsis thaliana (Mouse-ear cress).